The primary structure comprises 404 residues: Alanyl-tRNA editing protein AlaX-L (404 aa).

4 residues coordinate Zn(2+): histidine 104, histidine 108, cysteine 202, and histidine 206.

The protein belongs to the class-II aminoacyl-tRNA synthetase family. Editing domain AlaX-L subfamily. The cofactor is Zn(2+).

Its subcellular location is the cytoplasm. Its function is as follows. Functions in trans to edit the amino acid moiety from mischarged charged tRNA(Ala). In Pyrococcus horikoshii (strain ATCC 700860 / DSM 12428 / JCM 9974 / NBRC 100139 / OT-3), this protein is Alanyl-tRNA editing protein AlaX-L (alaXL).